Consider the following 333-residue polypeptide: Cysteine protease (333 aa).

Residues 1 to 18 (MKFLLVAALCALVAIGSC) form the signal peptide. Positions 19–108 (KPTREEIKTF…MEAAKEPLIN (90 aa)) are cleaved as a propeptide — activation peptide. A glycan (N-linked (GlcNAc...) asparagine) is linked at N93. 2 cysteine pairs are disulfide-bonded: C134/C182 and C168/C214. Residue C137 is part of the active site. Active-site residues include H281 and N301.

Belongs to the peptidase C1 family. Homodimer.

Its function is as follows. Cysteine protease. The sequence is that of Cysteine protease from Blomia tropicalis (Mite).